An 89-amino-acid polypeptide reads, in one-letter code: MAMNKLNFLLLLAVCVSAFSVVMQQNQYRLNFTALDKAKKQEIALEQDYAQMRLQQARLANHEAIRAAAEKQNLHPPVSGNTFMVEHQR.

Residues 1–6 (MAMNKL) lie on the Cytoplasmic side of the membrane. A helical transmembrane segment spans residues 7–24 (NFLLLLAVCVSAFSVVMQ). Over 25 to 89 (QNQYRLNFTA…GNTFMVEHQR (65 aa)) the chain is Periplasmic. The stretch at 33–73 (TALDKAKKQEIALEQDYAQMRLQQARLANHEAIRAAAEKQN) forms a coiled coil.

It belongs to the FtsL family. Part of a complex composed of FtsB, FtsL and FtsQ.

It localises to the cell inner membrane. In terms of biological role, essential cell division protein. May link together the upstream cell division proteins, which are predominantly cytoplasmic, with the downstream cell division proteins, which are predominantly periplasmic. In Neisseria meningitidis serogroup B (strain ATCC BAA-335 / MC58), this protein is Cell division protein FtsL.